Consider the following 252-residue polypeptide: uncharacterized protein (252 aa).

16–40 is an NADP(+) binding site; it reads LVTGASDGIGREAAMTYARYGATVI. Position 152 (Ser152) interacts with substrate. Tyr165 acts as the Proton acceptor in catalysis.

It belongs to the short-chain dehydrogenases/reductases (SDR) family.

This is an uncharacterized protein from Escherichia coli (strain K12).